We begin with the raw amino-acid sequence, 786 residues long: Endonuclease MutS2 (786 aa).

Residue 332 to 339 (GPNTGGKT) participates in ATP binding. The Smr domain maps to 711–786 (IDLRGMDSEE…GTGVTVVILK (76 aa)).

It belongs to the DNA mismatch repair MutS family. MutS2 subfamily. In terms of assembly, homodimer. Binds to stalled ribosomes, contacting rRNA.

In terms of biological role, endonuclease that is involved in the suppression of homologous recombination and thus may have a key role in the control of bacterial genetic diversity. Acts as a ribosome collision sensor, splitting the ribosome into its 2 subunits. Detects stalled/collided 70S ribosomes which it binds and splits by an ATP-hydrolysis driven conformational change. Acts upstream of the ribosome quality control system (RQC), a ribosome-associated complex that mediates the extraction of incompletely synthesized nascent chains from stalled ribosomes and their subsequent degradation. Probably generates substrates for RQC. This Clostridium perfringens (strain ATCC 13124 / DSM 756 / JCM 1290 / NCIMB 6125 / NCTC 8237 / Type A) protein is Endonuclease MutS2.